A 508-amino-acid polypeptide reads, in one-letter code: Steroid 17-alpha-hydroxylase/17,20 lyase (508 aa).

Asparagine 202 contributes to the substrate binding site. Heme is bound at residue cysteine 442.

It belongs to the cytochrome P450 family. Heme serves as cofactor.

The protein resides in the endoplasmic reticulum membrane. It localises to the microsome membrane. The catalysed reaction is a C21-steroid + reduced [NADPH--hemoprotein reductase] + O2 = a 17alpha-hydroxy-C21-steroid + oxidized [NADPH--hemoprotein reductase] + H2O + H(+). It carries out the reaction progesterone + reduced [NADPH--hemoprotein reductase] + O2 = 17alpha-hydroxyprogesterone + oxidized [NADPH--hemoprotein reductase] + H2O + H(+). The enzyme catalyses pregnenolone + reduced [NADPH--hemoprotein reductase] + O2 = 17alpha-hydroxypregnenolone + oxidized [NADPH--hemoprotein reductase] + H2O + H(+). It catalyses the reaction 17alpha-hydroxyprogesterone + reduced [NADPH--hemoprotein reductase] + O2 = androst-4-ene-3,17-dione + acetate + oxidized [NADPH--hemoprotein reductase] + H2O + 2 H(+). The catalysed reaction is 17alpha-hydroxyprogesterone + reduced [NADPH--hemoprotein reductase] + O2 = 16alpha,17alpha-dihydroxyprogesterone + oxidized [NADPH--hemoprotein reductase] + H2O + H(+). It carries out the reaction 16alpha,17alpha-dihydroxyprogesterone + reduced [NADPH--hemoprotein reductase] + O2 = 6beta,16alpha,17alpha-trihydroxyprogesterone + oxidized [NADPH--hemoprotein reductase] + H2O + H(+). The enzyme catalyses 17alpha-hydroxypregnenolone + reduced [NADPH--hemoprotein reductase] + O2 = 3beta-hydroxyandrost-5-en-17-one + acetate + oxidized [NADPH--hemoprotein reductase] + H2O + 2 H(+). It catalyses the reaction 16alpha,17alpha-dihydroxypregnenolone + reduced [NADPH--hemoprotein reductase] + O2 = 3beta,16alpha-dihydroxy-androst-5-en-17-one + acetate + oxidized [NADPH--hemoprotein reductase] + H2O + 2 H(+). The catalysed reaction is 3beta-hydroxyandrost-5-en-17-one + reduced [NADPH--hemoprotein reductase] + O2 = 3beta,16alpha-dihydroxy-androst-5-en-17-one + oxidized [NADPH--hemoprotein reductase] + H2O + H(+). It carries out the reaction androst-4-ene-3,17-dione + reduced [NADPH--hemoprotein reductase] + O2 = 16alpha-hydroxyandrost-4-ene-3,17-dione + oxidized [NADPH--hemoprotein reductase] + H2O + H(+). It participates in steroid hormone biosynthesis. It functions in the pathway steroid biosynthesis; glucocorticoid biosynthesis. Regulated predominantly by intracellular cAMP levels. The 17,20-lyase activity is stimulated by cytochrome b5, which acts as an allosteric effector increasing the Vmax of the lyase activity. Functionally, a cytochrome P450 monooxygenase involved in corticoid and androgen biosynthesis. Catalyzes 17-alpha hydroxylation of C21 steroids, which is common for both pathways. A second oxidative step, required only for androgen synthesis, involves an acyl-carbon cleavage. The 17-alpha hydroxy intermediates, as part of adrenal glucocorticoids biosynthesis pathway, are precursors of cortisol. Hydroxylates steroid hormones, pregnenolone and progesterone to form 17-alpha hydroxy metabolites, followed by the cleavage of the C17-C20 bond to form C19 steroids, dehydroepiandrosterone (DHEA) and androstenedione. Has 16-alpha hydroxylase activity. Catalyzes 16-alpha hydroxylation of 17-alpha hydroxy pregnenolone, followed by the cleavage of the C17-C20 bond to form 16-alpha-hydroxy DHEA. Also 16-alpha hydroxylates androgens, relevant for estriol synthesis. Mechanistically, uses molecular oxygen inserting one oxygen atom into a substrate, and reducing the second into a water molecule, with two electrons provided by NADPH via cytochrome P450 reductase (CPR; NADPH-ferrihemoprotein reductase). The sequence is that of Steroid 17-alpha-hydroxylase/17,20 lyase (CYP17A1) from Papio cynocephalus (Yellow baboon).